The sequence spans 370 residues: Ribosomal RNA small subunit methyltransferase H (370 aa).

S-adenosyl-L-methionine contacts are provided by residues 85 to 87 (GGH), D104, Y131, D152, and Q159. Composition is skewed to basic and acidic residues over residues 332-345 (GAERATPEEIERNP) and 353-370 (RALEKVAGRPTTARRDAR). Residues 332–370 (GAERATPEEIERNPRSAPVRLRALEKVAGRPTTARRDAR) form a disordered region.

This sequence belongs to the methyltransferase superfamily. RsmH family.

It is found in the cytoplasm. The catalysed reaction is cytidine(1402) in 16S rRNA + S-adenosyl-L-methionine = N(4)-methylcytidine(1402) in 16S rRNA + S-adenosyl-L-homocysteine + H(+). Specifically methylates the N4 position of cytidine in position 1402 (C1402) of 16S rRNA. In Mycobacterium sp. (strain KMS), this protein is Ribosomal RNA small subunit methyltransferase H.